We begin with the raw amino-acid sequence, 86 residues long: Putative pro-MCH-like protein 1 (86 aa).

Residues 31 to 49 (GSVAFPAENGVQDTESTQE) are NGE-like. The segment at 38 to 62 (ENGVQDTESTQEKRETGDEENSAKF) is disordered. The segment at 52 to 64 (ETGDEENSAKFPV) is NEI-like. Positions 68 to 86 (DFDTLSCMLGRVYQSCWQV) are melanin-concentrating hormone-like.

This sequence belongs to the melanin-concentrating hormone family. As to expression, expressed in testis and brain.

The sequence is that of Putative pro-MCH-like protein 1 (PMCHL1) from Homo sapiens (Human).